We begin with the raw amino-acid sequence, 474 residues long: tRNA-2-methylthio-N(6)-dimethylallyladenosine synthase (474 aa).

The 118-residue stretch at 3–120 folds into the MTTase N-terminal domain; sequence KKLHIKTWGC…LPDMIEQVRR (118 aa). 6 residues coordinate [4Fe-4S] cluster: cysteine 12, cysteine 49, cysteine 83, cysteine 157, cysteine 161, and cysteine 164. The region spanning 143–375 is the Radical SAM core domain; sequence RAEGPTAFVS…QDRITQQAMR (233 aa). The region spanning 378-441 is the TRAM domain; sequence RHMMGTVQRI…TNSLRGKFIR (64 aa).

Belongs to the methylthiotransferase family. MiaB subfamily. As to quaternary structure, monomer. Requires [4Fe-4S] cluster as cofactor.

Its subcellular location is the cytoplasm. It catalyses the reaction N(6)-dimethylallyladenosine(37) in tRNA + (sulfur carrier)-SH + AH2 + 2 S-adenosyl-L-methionine = 2-methylsulfanyl-N(6)-dimethylallyladenosine(37) in tRNA + (sulfur carrier)-H + 5'-deoxyadenosine + L-methionine + A + S-adenosyl-L-homocysteine + 2 H(+). Catalyzes the methylthiolation of N6-(dimethylallyl)adenosine (i(6)A), leading to the formation of 2-methylthio-N6-(dimethylallyl)adenosine (ms(2)i(6)A) at position 37 in tRNAs that read codons beginning with uridine. The chain is tRNA-2-methylthio-N(6)-dimethylallyladenosine synthase from Shewanella sp. (strain W3-18-1).